A 131-amino-acid chain; its full sequence is D-ribose pyranase (131 aa).

Catalysis depends on His20, which acts as the Proton donor. Residues Asp28, His98, and 120 to 122 contribute to the substrate site; that span reads YSN.

Belongs to the RbsD / FucU family. RbsD subfamily. In terms of assembly, homodecamer.

The protein localises to the cytoplasm. The enzyme catalyses beta-D-ribopyranose = beta-D-ribofuranose. The protein operates within carbohydrate metabolism; D-ribose degradation; D-ribose 5-phosphate from beta-D-ribopyranose: step 1/2. Catalyzes the interconversion of beta-pyran and beta-furan forms of D-ribose. The polypeptide is D-ribose pyranase (Lactiplantibacillus plantarum (strain ATCC BAA-793 / NCIMB 8826 / WCFS1) (Lactobacillus plantarum)).